Reading from the N-terminus, the 88-residue chain is ATP synthase subunit c (88 aa).

A run of 2 helical transmembrane segments spans residues 10–30 and 68–88; these read ILAA…GPGI and GIYS…IRLL.

This sequence belongs to the ATPase C chain family. As to quaternary structure, F-type ATPases have 2 components, F(1) - the catalytic core - and F(0) - the membrane proton channel. F(1) has five subunits: alpha(3), beta(3), gamma(1), delta(1), epsilon(1). F(0) has three main subunits: a(1), b(2) and c(10-14). The alpha and beta chains form an alternating ring which encloses part of the gamma chain. F(1) is attached to F(0) by a central stalk formed by the gamma and epsilon chains, while a peripheral stalk is formed by the delta and b chains.

It localises to the cell membrane. Functionally, f(1)F(0) ATP synthase produces ATP from ADP in the presence of a proton or sodium gradient. F-type ATPases consist of two structural domains, F(1) containing the extramembraneous catalytic core and F(0) containing the membrane proton channel, linked together by a central stalk and a peripheral stalk. During catalysis, ATP synthesis in the catalytic domain of F(1) is coupled via a rotary mechanism of the central stalk subunits to proton translocation. Key component of the F(0) channel; it plays a direct role in translocation across the membrane. A homomeric c-ring of between 10-14 subunits forms the central stalk rotor element with the F(1) delta and epsilon subunits. This Alkaliphilus oremlandii (strain OhILAs) (Clostridium oremlandii (strain OhILAs)) protein is ATP synthase subunit c.